A 293-amino-acid chain; its full sequence is AKT-interacting protein homolog A (293 aa).

A compositionally biased stretch (polar residues) spans 1 to 11 (MNPFWNMSSAS). Residues 1 to 45 (MNPFWNMSSASVRKRSENDEKISTGDQKISPPRSSSAKKQLPPIP) form a disordered region. A compositionally biased stretch (basic and acidic residues) spans 14-23 (KRSENDEKIS). Residues 24–38 (TGDQKISPPRSSSAK) are compositionally biased toward polar residues. The region spanning 75 to 223 (YLEYSLLAEF…VVDSVKLCNS (149 aa)) is the UBC core domain. Over residues 256–266 (AQKKKSEEQSK) the composition is skewed to basic and acidic residues. The interval 256–293 (AQKKKSEEQSKGLHVSGLSWVKPGSVLPFSKEENSLQT) is disordered.

This sequence belongs to the ubiquitin-conjugating enzyme family. FTS subfamily.

The protein localises to the cytoplasm. Its subcellular location is the cell membrane. Functionally, may function to promote vesicle trafficking and/or fusion. May also regulate apoptosis. The polypeptide is AKT-interacting protein homolog A (aktip-a) (Xenopus laevis (African clawed frog)).